Reading from the N-terminus, the 367-residue chain is tRNA 2-selenouridine synthase (367 aa).

The Rhodanese domain maps to 15–138 (FLQARPLIDV…LRTFLIQILE (124 aa)). Residue C98 is the S-selanylcysteine intermediate of the active site.

It belongs to the SelU family. As to quaternary structure, monomer.

The catalysed reaction is 5-methylaminomethyl-2-thiouridine(34) in tRNA + selenophosphate + (2E)-geranyl diphosphate + H2O + H(+) = 5-methylaminomethyl-2-selenouridine(34) in tRNA + (2E)-thiogeraniol + phosphate + diphosphate. The enzyme catalyses 5-methylaminomethyl-2-thiouridine(34) in tRNA + (2E)-geranyl diphosphate = 5-methylaminomethyl-S-(2E)-geranyl-thiouridine(34) in tRNA + diphosphate. It carries out the reaction 5-methylaminomethyl-S-(2E)-geranyl-thiouridine(34) in tRNA + selenophosphate + H(+) = 5-methylaminomethyl-2-(Se-phospho)selenouridine(34) in tRNA + (2E)-thiogeraniol. It catalyses the reaction 5-methylaminomethyl-2-(Se-phospho)selenouridine(34) in tRNA + H2O = 5-methylaminomethyl-2-selenouridine(34) in tRNA + phosphate. In terms of biological role, involved in the post-transcriptional modification of the uridine at the wobble position (U34) of tRNA(Lys), tRNA(Glu) and tRNA(Gln). Catalyzes the conversion of 2-thiouridine (S2U-RNA) to 2-selenouridine (Se2U-RNA). Acts in a two-step process involving geranylation of 2-thiouridine (S2U) to S-geranyl-2-thiouridine (geS2U) and subsequent selenation of the latter derivative to 2-selenouridine (Se2U) in the tRNA chain. This chain is tRNA 2-selenouridine synthase, found in Shewanella denitrificans (strain OS217 / ATCC BAA-1090 / DSM 15013).